A 483-amino-acid chain; its full sequence is Type 2 glycosyltransferase (483 aa).

Residues Ala21 to Leu41 form a helical membrane-spanning segment. The Dxd motif motif lies at Asp156–Asp158. The QxxxRW motif signature appears at Gln301 to Trp305. Asn313 carries an N-linked (GlcNAc...) asparagine glycan. 3 consecutive transmembrane segments (helical) span residues Ile336–Trp356, Ala369–Phe389, and Ile396–Ala416. Asn421 is a glycosylation site (N-linked (GlcNAc...) asparagine).

This sequence belongs to the GT2 glycosyltransferase family.

It is found in the cell membrane. Glycosyltransferase that plays an important role in infection-related morphogenesis and pathogenesis. Involved in stress tolerance and hyphal hydrophobicity via its regulation of the expression of nydrophobin MPG1. May regulate growth, pathogenicity, and cell wall integrity (CWI) through glycosylation of heat shock protein SSB1, and other (unidentified) substrates may contribute to conidiation. Candidate proteins as potential substrates of GT2 include several heat shock proteins (SSB1/MGG_02503, MGG_06759 and MGG_06958), two coiled-coil domain-containing proteins (MGG_04321 and MGG_09571), aminopeptidase 2 (MGG_16472), and a nuclease domain-containing protein (MGG_12646). The protein is Type 2 glycosyltransferase of Pyricularia oryzae (strain 70-15 / ATCC MYA-4617 / FGSC 8958) (Rice blast fungus).